A 371-amino-acid chain; its full sequence is Bifunctional chorismate mutase/prephenate dehydratase (371 aa).

Positions 1-92 (MTLKNALLAF…DSVLTQKKWI (92 aa)) constitute a Chorismate mutase domain. Residues Arg11, Arg28, Lys39, Asp48, Glu52, Ser84, and Gln88 each contribute to the substrate site. Residues 104 to 284 (KISFLGSFGS…NITQFIILAQ (181 aa)) form the Prephenate dehydratase domain. The interval 285–371 (KKTYITNKKT…IKCIKILGCF (87 aa)) is regulatory.

The protein localises to the cytoplasm. It carries out the reaction chorismate = prephenate. The enzyme catalyses prephenate + H(+) = 3-phenylpyruvate + CO2 + H2O. It functions in the pathway amino-acid biosynthesis; L-phenylalanine biosynthesis; phenylpyruvate from prephenate: step 1/1. The protein operates within metabolic intermediate biosynthesis; prephenate biosynthesis; prephenate from chorismate: step 1/1. Catalyzes the Claisen rearrangement of chorismate to prephenate and the decarboxylation/dehydration of prephenate to phenylpyruvate. The sequence is that of Bifunctional chorismate mutase/prephenate dehydratase (pheA) from Buchnera aphidicola subsp. Baizongia pistaciae (strain Bp).